The following is a 176-amino-acid chain: NAD(P)H-quinone oxidoreductase subunit 6, chloroplastic (176 aa).

Transmembrane regions (helical) follow at residues 10 to 30 (FLLV…VLLT), 32 to 52 (PIYS…FYIL), 61 to 81 (AQLL…VMFM), 92 to 112 (LWTI…VSLI), and 152 to 172 (FFLP…GAIA).

Belongs to the complex I subunit 6 family. NDH is composed of at least 16 different subunits, 5 of which are encoded in the nucleus.

The protein resides in the plastid. The protein localises to the chloroplast thylakoid membrane. It carries out the reaction a plastoquinone + NADH + (n+1) H(+)(in) = a plastoquinol + NAD(+) + n H(+)(out). The catalysed reaction is a plastoquinone + NADPH + (n+1) H(+)(in) = a plastoquinol + NADP(+) + n H(+)(out). In terms of biological role, NDH shuttles electrons from NAD(P)H:plastoquinone, via FMN and iron-sulfur (Fe-S) centers, to quinones in the photosynthetic chain and possibly in a chloroplast respiratory chain. The immediate electron acceptor for the enzyme in this species is believed to be plastoquinone. Couples the redox reaction to proton translocation, and thus conserves the redox energy in a proton gradient. This chain is NAD(P)H-quinone oxidoreductase subunit 6, chloroplastic (ndhG), found in Gossypium hirsutum (Upland cotton).